Consider the following 818-residue polypeptide: Elongation factor G, mitochondrial (818 aa).

Residues 1 to 23 constitute a mitochondrion transit peptide; sequence MFLGRAASRTCRHSQPLRVAARA. The segment at 67–96 is disordered; that stretch reads MASTATATKPTEEASSSDQPPAPAHKLTDN. Positions 69–85 are enriched in polar residues; sequence STATATKPTEEASSSDQ. Positions 102–390 constitute a tr-type G domain; sequence TFQRNIGISA…GVCEYLPNPS (289 aa). Residues 111-118, 188-192, and 242-245 contribute to the GTP site; these read AHIDSGKT, DTPGH, and NKMD.

The protein belongs to the TRAFAC class translation factor GTPase superfamily. Classic translation factor GTPase family. EF-G/EF-2 subfamily.

It localises to the mitochondrion. The protein operates within protein biosynthesis; polypeptide chain elongation. Functionally, mitochondrial GTPase that catalyzes the GTP-dependent ribosomal translocation step during translation elongation. During this step, the ribosome changes from the pre-translocational (PRE) to the post-translocational (POST) state as the newly formed A-site-bound peptidyl-tRNA and P-site-bound deacylated tRNA move to the P and E sites, respectively. Catalyzes the coordinated movement of the two tRNA molecules, the mRNA and conformational changes in the ribosome. The chain is Elongation factor G, mitochondrial from Coprinopsis cinerea (strain Okayama-7 / 130 / ATCC MYA-4618 / FGSC 9003) (Inky cap fungus).